The chain runs to 289 residues: tRNA-cytidine(32) 2-sulfurtransferase (289 aa).

Positions 49–54 match the PP-loop motif motif; it reads SGGKDS. [4Fe-4S] cluster-binding residues include Cys-124, Cys-127, and Cys-215.

This sequence belongs to the TtcA family. As to quaternary structure, homodimer. Mg(2+) is required as a cofactor. [4Fe-4S] cluster serves as cofactor.

The protein resides in the cytoplasm. It carries out the reaction cytidine(32) in tRNA + S-sulfanyl-L-cysteinyl-[cysteine desulfurase] + AH2 + ATP = 2-thiocytidine(32) in tRNA + L-cysteinyl-[cysteine desulfurase] + A + AMP + diphosphate + H(+). The protein operates within tRNA modification. Functionally, catalyzes the ATP-dependent 2-thiolation of cytidine in position 32 of tRNA, to form 2-thiocytidine (s(2)C32). The sulfur atoms are provided by the cysteine/cysteine desulfurase (IscS) system. The sequence is that of tRNA-cytidine(32) 2-sulfurtransferase from Methylococcus capsulatus (strain ATCC 33009 / NCIMB 11132 / Bath).